The primary structure comprises 78 residues: Short neurotoxin 342 (78 aa).

A signal peptide spans 1–21; the sequence is MKTLLLTLVVLTIVCLDLGYT. 4 cysteine pairs are disulfide-bonded: C24/C43, C38/C57, C59/C70, and C71/C76.

It belongs to the three-finger toxin family. Short-chain subfamily. Type I alpha-neurotoxin sub-subfamily. Expressed by the venom gland.

It localises to the secreted. In terms of biological role, binds to muscle nicotinic acetylcholine receptor (nAChR) and inhibit acetylcholine from binding to the receptor, thereby impairing neuromuscular transmission. This is Short neurotoxin 342 from Drysdalia coronoides (White-lipped snake).